Reading from the N-terminus, the 968-residue chain is Leucine--tRNA ligase (968 aa).

The span at 1–13 shows a compositional bias: polar residues; that stretch reads MTETPTGTQSSRE. The tract at residues 1–22 is disordered; sequence MTETPTGTQSSRETAADDTPRH. Positions 75–86 match the 'HIGH' region motif; it reads PYPSGEGLHVGH. The 'KMSKS' region motif lies at 741-745; the sequence is KIGKS. ATP is bound at residue lysine 744.

The protein belongs to the class-I aminoacyl-tRNA synthetase family.

It localises to the cytoplasm. It catalyses the reaction tRNA(Leu) + L-leucine + ATP = L-leucyl-tRNA(Leu) + AMP + diphosphate. The polypeptide is Leucine--tRNA ligase (Mycolicibacterium vanbaalenii (strain DSM 7251 / JCM 13017 / BCRC 16820 / KCTC 9966 / NRRL B-24157 / PYR-1) (Mycobacterium vanbaalenii)).